We begin with the raw amino-acid sequence, 389 residues long: Succinate--CoA ligase [ADP-forming] subunit beta (389 aa).

Residues 9-246 form the ATP-grasp domain; sequence KEILRRHNAN…ITEEDPYEVK (238 aa). Residues Lys-48, 55-57, Glu-101, Leu-104, and Glu-109 contribute to the ATP site; that span reads GRG. Mg(2+) contacts are provided by Asn-201 and Asp-215. Substrate contacts are provided by residues Asn-266 and 323-325; that span reads GIV.

The protein belongs to the succinate/malate CoA ligase beta subunit family. As to quaternary structure, heterotetramer of two alpha and two beta subunits. Mg(2+) is required as a cofactor.

The enzyme catalyses succinate + ATP + CoA = succinyl-CoA + ADP + phosphate. The catalysed reaction is GTP + succinate + CoA = succinyl-CoA + GDP + phosphate. The protein operates within carbohydrate metabolism; tricarboxylic acid cycle; succinate from succinyl-CoA (ligase route): step 1/1. In terms of biological role, succinyl-CoA synthetase functions in the citric acid cycle (TCA), coupling the hydrolysis of succinyl-CoA to the synthesis of either ATP or GTP and thus represents the only step of substrate-level phosphorylation in the TCA. The beta subunit provides nucleotide specificity of the enzyme and binds the substrate succinate, while the binding sites for coenzyme A and phosphate are found in the alpha subunit. This Leptospira biflexa serovar Patoc (strain Patoc 1 / Ames) protein is Succinate--CoA ligase [ADP-forming] subunit beta.